Consider the following 246-residue polypeptide: Triosephosphate isomerase (246 aa).

9-11 (NWK) provides a ligand contact to substrate. Catalysis depends on His99, which acts as the Electrophile. Glu168 (proton acceptor) is an active-site residue. Substrate contacts are provided by residues Gly174, Ser207, and 228 to 229 (GG).

The protein belongs to the triosephosphate isomerase family. Homodimer.

Its subcellular location is the cytoplasm. It carries out the reaction D-glyceraldehyde 3-phosphate = dihydroxyacetone phosphate. The protein operates within carbohydrate biosynthesis; gluconeogenesis. Its pathway is carbohydrate degradation; glycolysis; D-glyceraldehyde 3-phosphate from glycerone phosphate: step 1/1. In terms of biological role, involved in the gluconeogenesis. Catalyzes stereospecifically the conversion of dihydroxyacetone phosphate (DHAP) to D-glyceraldehyde-3-phosphate (G3P). This chain is Triosephosphate isomerase, found in Prochlorococcus marinus (strain NATL2A).